The chain runs to 274 residues: Diaminopimelate epimerase (274 aa).

Positions 11, 44, and 64 each coordinate substrate. Cys-73 (proton donor) is an active-site residue. Residues 74 to 75, Asn-157, Asn-190, and 208 to 209 contribute to the substrate site; these read GN and ER. Catalysis depends on Cys-217, which acts as the Proton acceptor. 218-219 contacts substrate; it reads GS.

This sequence belongs to the diaminopimelate epimerase family. As to quaternary structure, homodimer.

The protein localises to the cytoplasm. The enzyme catalyses (2S,6S)-2,6-diaminopimelate = meso-2,6-diaminopimelate. The protein operates within amino-acid biosynthesis; L-lysine biosynthesis via DAP pathway; DL-2,6-diaminopimelate from LL-2,6-diaminopimelate: step 1/1. In terms of biological role, catalyzes the stereoinversion of LL-2,6-diaminopimelate (L,L-DAP) to meso-diaminopimelate (meso-DAP), a precursor of L-lysine and an essential component of the bacterial peptidoglycan. This is Diaminopimelate epimerase from Pectobacterium atrosepticum (strain SCRI 1043 / ATCC BAA-672) (Erwinia carotovora subsp. atroseptica).